The primary structure comprises 395 residues: MGIKHLYQVISENAPDAVKTGEIKNHFGRKVAIDASMSIYSFLIAVRSDGQQLMSEAGETTSHLMGMFYRTLRIVDNGIKPLYVFDGAPPKMKGGELAKRSARKREAHEAHEEAKETGTAEDMEKFSRRTVRVTREHNEECKKLLKLMGVPYIDAPTEAEAQCAVLARAGKVYAAASEDMDTLCFEAPILLRHLTFSEQRKEPILEIHLDKALEGLGMDMAQFIDLCILLGCDYLEPIPKVGPNTALKLIREHGSLEKVVEAIENDPKKKYVIPDDWPYQEARELFFNPDVRKADDPQCDFKWESPDVEGLVKFLVTDKGFSEDRVRNGAARLAKNLKTAQQSRLEGFFKPVAKTDAEKASMKRKHDEKIEEQKKRKKEDAKAKKEAKARPRGAV.

The tract at residues 1–104 is N-domain; the sequence is MGIKHLYQVI…GELAKRSARK (104 aa). Asp34 is a binding site for Mg(2+). DNA is bound by residues Arg47 and Arg70. A Mg(2+)-binding site is contributed by Asp86. The segment at 94–124 is disordered; the sequence is GGELAKRSARKREAHEAHEEAKETGTAEDME. An I-domain region spans residues 122–253; sequence DMEKFSRRTV…NTALKLIREH (132 aa). Mg(2+) is bound by residues Glu158, Glu160, Asp179, and Asp181. Glu158 provides a ligand contact to DNA. DNA is bound by residues Gly231 and Asp233. Asp233 lines the Mg(2+) pocket. The interaction with PCNA stretch occupies residues 341–349; sequence QQSRLEGFF. Positions 356-389 are enriched in basic and acidic residues; it reads DAEKASMKRKHDEKIEEQKKRKKEDAKAKKEAKA. Residues 356–395 are disordered; the sequence is DAEKASMKRKHDEKIEEQKKRKKEDAKAKKEAKARPRGAV.

The protein belongs to the XPG/RAD2 endonuclease family. FEN1 subfamily. In terms of assembly, interacts with PCNA. Three molecules of fen1 bind to one PCNA trimer with each molecule binding to one PCNA monomer. PCNA stimulates the nuclease activity without altering cleavage specificity. Mg(2+) is required as a cofactor. In terms of processing, phosphorylated. Phosphorylation upon DNA damage induces relocalization to the nuclear plasma.

The protein resides in the nucleus. It localises to the nucleolus. The protein localises to the nucleoplasm. Its subcellular location is the mitochondrion. Its function is as follows. Structure-specific nuclease with 5'-flap endonuclease and 5'-3' exonuclease activities involved in DNA replication and repair. During DNA replication, cleaves the 5'-overhanging flap structure that is generated by displacement synthesis when DNA polymerase encounters the 5'-end of a downstream Okazaki fragment. It enters the flap from the 5'-end and then tracks to cleave the flap base, leaving a nick for ligation. Also involved in the long patch base excision repair (LP-BER) pathway, by cleaving within the apurinic/apyrimidinic (AP) site-terminated flap. Acts as a genome stabilization factor that prevents flaps from equilibrating into structures that lead to duplications and deletions. Also possesses 5'-3' exonuclease activity on nicked or gapped double-stranded DNA, and exhibits RNase H activity. Also involved in replication and repair of rDNA and in repairing mitochondrial DNA. This chain is Flap endonuclease 1 (fen1), found in Talaromyces marneffei (strain ATCC 18224 / CBS 334.59 / QM 7333) (Penicillium marneffei).